A 145-amino-acid chain; its full sequence is 3-hydroxyacyl-[acyl-carrier-protein] dehydratase FabZ (145 aa).

Residue His48 is part of the active site.

It belongs to the thioester dehydratase family. FabZ subfamily.

Its subcellular location is the cytoplasm. The enzyme catalyses a (3R)-hydroxyacyl-[ACP] = a (2E)-enoyl-[ACP] + H2O. Its function is as follows. Involved in unsaturated fatty acids biosynthesis. Catalyzes the dehydration of short chain beta-hydroxyacyl-ACPs and long chain saturated and unsaturated beta-hydroxyacyl-ACPs. The chain is 3-hydroxyacyl-[acyl-carrier-protein] dehydratase FabZ from Geobacillus sp. (strain WCH70).